We begin with the raw amino-acid sequence, 635 residues long: Threonine--tRNA ligase (635 aa).

The TGS domain occupies 1–61; that stretch reads MIAITLPDGS…DRDAELAIVT (61 aa). The interval 242 to 533 is catalytic; sequence DHRKLGKTLD…LLENHAGALP (292 aa). Zn(2+) is bound by residues Cys-333, His-384, and His-510.

It belongs to the class-II aminoacyl-tRNA synthetase family. As to quaternary structure, homodimer. Zn(2+) is required as a cofactor.

It is found in the cytoplasm. The enzyme catalyses tRNA(Thr) + L-threonine + ATP = L-threonyl-tRNA(Thr) + AMP + diphosphate + H(+). In terms of biological role, catalyzes the attachment of threonine to tRNA(Thr) in a two-step reaction: L-threonine is first activated by ATP to form Thr-AMP and then transferred to the acceptor end of tRNA(Thr). Also edits incorrectly charged L-seryl-tRNA(Thr). The chain is Threonine--tRNA ligase from Cupriavidus necator (strain ATCC 17699 / DSM 428 / KCTC 22496 / NCIMB 10442 / H16 / Stanier 337) (Ralstonia eutropha).